The chain runs to 213 residues: Transcription antitermination protein NusB (213 aa).

Belongs to the NusB family.

Involved in transcription antitermination. Required for transcription of ribosomal RNA (rRNA) genes. Binds specifically to the boxA antiterminator sequence of the ribosomal RNA (rrn) operons. The chain is Transcription antitermination protein NusB from Synechococcus elongatus (strain ATCC 33912 / PCC 7942 / FACHB-805) (Anacystis nidulans R2).